The primary structure comprises 94 residues: Co-chaperonin GroES (94 aa).

The protein belongs to the GroES chaperonin family. In terms of assembly, heptamer of 7 subunits arranged in a ring. Interacts with the chaperonin GroEL.

Its subcellular location is the cytoplasm. In terms of biological role, together with the chaperonin GroEL, plays an essential role in assisting protein folding. The GroEL-GroES system forms a nano-cage that allows encapsulation of the non-native substrate proteins and provides a physical environment optimized to promote and accelerate protein folding. GroES binds to the apical surface of the GroEL ring, thereby capping the opening of the GroEL channel. This chain is Co-chaperonin GroES, found in Alkaliphilus oremlandii (strain OhILAs) (Clostridium oremlandii (strain OhILAs)).